A 57-amino-acid chain; its full sequence is UPF0391 membrane protein RPC_2356 (57 aa).

2 consecutive transmembrane segments (helical) span residues 6–26 and 35–55; these read WALI…TGIS and ILFY…LTIF.

It belongs to the UPF0391 family.

The protein localises to the cell membrane. The sequence is that of UPF0391 membrane protein RPC_2356 from Rhodopseudomonas palustris (strain BisB18).